We begin with the raw amino-acid sequence, 159 residues long: Transmembrane protein 42 (159 aa).

Helical transmembrane passes span 37–57 (FWGV…AASA), 59–79 (LAFG…VMAS), 100–120 (IASV…GYVL), and 124–144 (CQEV…TLIH).

The protein localises to the membrane. The sequence is that of Transmembrane protein 42 (TMEM42) from Pongo abelii (Sumatran orangutan).